Here is a 497-residue protein sequence, read N- to C-terminus: Nuclear pore complex protein npp-16 (497 aa).

3 disordered regions span residues 76–95 (VPRR…APRK), 210–308 (TKKS…SAPK), and 359–379 (MENQ…GEYV). Basic and acidic residues-rich tracts occupy residues 231–240 (KDGDKPKETP) and 250–260 (KPAEPSEEPKA). Positions 390–497 (EPDAVLSSKV…FTDKILEVAV (108 aa)) are ranBD1.

As to quaternary structure, interacts with importin beta imb-1. Interacts with DNA-directed RNA polymerase III subunit rpc-1. Interacts with TATA-box-binding protein tbp-1. Interacts with GTF3C5 homolog tftc-5. Interacts with GTF3C3 homolog tftc-3.

Its subcellular location is the nucleus. The protein localises to the nuclear pore complex. It is found in the nucleus membrane. In terms of biological role, component of the nuclear pore complex. Plays a direct role in nuclear protein import. Required for anoxia-induced prophase arrest; may function in concert with cdk-1 to arrest prophase blastomeres in response to anoxia. This is Nuclear pore complex protein npp-16 from Caenorhabditis elegans.